Here is a 281-residue protein sequence, read N- to C-terminus: Proteasome subunit beta (281 aa).

Residues 1–53 (MEANTRSTGRLPAAFLTPGSSSFMDFLGEHQPEMLPGNRQLPPVQGVIEAPHG) constitute a propeptide, removed in mature form; by autocatalysis. T54 (nucleophile) is an active-site residue.

The protein belongs to the peptidase T1B family. As to quaternary structure, the 20S proteasome core is composed of 14 alpha and 14 beta subunits that assemble into four stacked heptameric rings, resulting in a barrel-shaped structure. The two inner rings, each composed of seven catalytic beta subunits, are sandwiched by two outer rings, each composed of seven alpha subunits. The catalytic chamber with the active sites is on the inside of the barrel. Has probably a gated structure, the ends of the cylinder being occluded by the N-termini of the alpha-subunits. Is likely capped by the proteasome-associated ATPase, ARC.

It localises to the cytoplasm. The catalysed reaction is Cleavage of peptide bonds with very broad specificity.. It functions in the pathway protein degradation; proteasomal Pup-dependent pathway. The formation of the proteasomal ATPase ARC-20S proteasome complex, likely via the docking of the C-termini of ARC into the intersubunit pockets in the alpha-rings, may trigger opening of the gate for substrate entry. Interconversion between the open-gate and close-gate conformations leads to a dynamic regulation of the 20S proteasome proteolysis activity. Peptidolytic activity is completely inhibited by lactacystin, and to a lesser extent, by N-acetyl-Leu-Leu-norleucinal (Ac-LLnL) and benzoyloxycarbonyl-Leu-Leu-Leu-vinylsulfone (Z-LLL-VS) in vitro. In terms of biological role, component of the proteasome core, a large protease complex with broad specificity involved in protein degradation. The S.coelicolor proteasome is able to cleave oligopeptides after hydrophobic residues, but not after basic or acidic residues, thus displaying chymotrypsin-like activity but not trypsin-like activity. The chain is Proteasome subunit beta from Streptomyces coelicolor (strain ATCC BAA-471 / A3(2) / M145).